The following is a 171-amino-acid chain: Probable deoxyuridine 5'-triphosphate nucleotidohydrolase (171 aa).

This sequence belongs to the dCTP deaminase family. Archaeal dUTPase subfamily.

It catalyses the reaction dUTP + H2O = dUMP + diphosphate + H(+). Its pathway is pyrimidine metabolism; dUMP biosynthesis; dUMP from dCTP (dUTP route): step 2/2. Functionally, this enzyme is involved in nucleotide metabolism: it produces dUMP, the immediate precursor of thymidine nucleotides and it decreases the intracellular concentration of dUTP so that uracil cannot be incorporated into DNA. This is Probable deoxyuridine 5'-triphosphate nucleotidohydrolase from Methanosarcina mazei (strain ATCC BAA-159 / DSM 3647 / Goe1 / Go1 / JCM 11833 / OCM 88) (Methanosarcina frisia).